The following is a 512-amino-acid chain: Probable DNA ligase (512 aa).

Glu208 contributes to the ATP binding site. Catalysis depends on Lys210, which acts as the N6-AMP-lysine intermediate. ATP is bound by residues Arg215, Arg230, Glu259, Phe299, Arg374, and Lys380.

This sequence belongs to the ATP-dependent DNA ligase family. Requires Mg(2+) as cofactor.

It carries out the reaction ATP + (deoxyribonucleotide)n-3'-hydroxyl + 5'-phospho-(deoxyribonucleotide)m = (deoxyribonucleotide)n+m + AMP + diphosphate.. Functionally, DNA ligase that seals nicks in double-stranded DNA during DNA replication, DNA recombination and DNA repair. The polypeptide is Probable DNA ligase (Streptomyces coelicolor (strain ATCC BAA-471 / A3(2) / M145)).